Reading from the N-terminus, the 84-residue chain is MTPQAALLDVQSEALHLASEVNAFLTTPNSTDFELILTKLSFRARAISFDEVAEPRRSFYESLKLNCIVCINVLIDIVLLKINM.

This is an uncharacterized protein from Orgyia pseudotsugata multicapsid polyhedrosis virus (OpMNPV).